We begin with the raw amino-acid sequence, 1583 residues long: Dynamin-binding protein (1583 aa).

Position 1 is an N-acetylmethionine (M1). SH3 domains are found at residues 2 to 61, 66 to 126, 145 to 204, and 243 to 302; these read EAGS…IVTI, EGER…ELCL, YSMG…LLGP, and QPGT…LFSK. Disordered stretches follow at residues 217 to 244, 306 to 329, and 366 to 464; these read HNDC…EEQP, EETM…DCRE, and ECEV…RGMY. Residues 224-243 are compositionally biased toward acidic residues; it reads GEEETPTGEEERGPEEDEEQ. The segment covering 366 to 379 has biased composition (basic and acidic residues); sequence ECEVHKSSHQDEGT. The segment covering 406-442 has biased composition (polar residues); sequence ETINGVSSQSQVPFRPRWQQNQYYSTTGRGHLSTEQY. Phosphoserine is present on S495. Disordered stretches follow at residues 594-656 and 671-693; these read RGSS…PSAQ and LFTH…QTLD. Pro residues predominate over residues 637 to 653; that stretch reads PEPPLAMRPSRPAPLPP. Over residues 675–685 the composition is skewed to basic and acidic residues; the sequence is ESCESPEKEGP. The stretch at 742-762 forms a coiled coil; it reads LEFYESNIESLNMELQQLREM. The DH domain maps to 791–974; sequence KRAKVIEELL…KEINVNINEY (184 aa). Residues 1015–1224 enclose the BAR domain; that stretch reads LKHLTGFAPQ…LKVAGREGNL (210 aa). Residues 1292–1355 enclose the SH3 5 domain; that stretch reads PPEKLFQAER…YSSFLKPYNT (64 aa). Positions 1357–1496 are disordered; the sequence is RSHSDVSVGS…GRNGQGKDLT (140 aa). A compositionally biased stretch (low complexity) spans 1361 to 1387; that stretch reads DVSVGSHSSTESEQSSSSPRFPRQNSS. Residues 1388 to 1414 are compositionally biased toward polar residues; it reads GTLTFNPGSMAVSFTSGSCQKQPQDAT. Over residues 1433-1456 the composition is skewed to low complexity; the sequence is SESSPSRCPSDPDSSPQPRSWDSP. The 64-residue stretch at 1519–1582 folds into the SH3 6 domain; the sequence is EGNQVYFAVY…PSNYIRKAEY (64 aa).

In terms of assembly, binds DNM1 via its N-terminal SH3 domains. The C-terminal SH3 domain binds a complex containing actin, tubulin, Hsp70 and actin-regulatory proteins, such as ENAH, EVL, WIRE, CR16, WAVE1 and NAP1L1. Interacts with FASLG. Interacts (via SH3 domain 6) with WASL. Interacts (via SH3 domain 6) interacts with ENAH. Interacts (via C-terminal domain) with TJP1; required for the apical cell-cell junction localization of DNMBP.

It localises to the cytoplasm. The protein localises to the golgi apparatus. It is found in the golgi stack. The protein resides in the cytoskeleton. Its subcellular location is the synapse. It localises to the cell junction. In terms of biological role, plays a critical role as a guanine nucleotide exchange factor (GEF) for CDC42 in several intracellular processes associated with the actin and microtubule cytoskeleton. Regulates the structure of apical junctions in epithelial cells. Participates in the normal lumenogenesis of epithelial cell cysts by regulating spindle orientation. Plays a key role in ciliogenesis and cyst formation. May play a role in membrane trafficking between the cell surface and the Golgi. The protein is Dynamin-binding protein of Canis lupus familiaris (Dog).